The primary structure comprises 213 residues: Orotate phosphoribosyltransferase (213 aa).

Residue K26 coordinates 5-phospho-alpha-D-ribose 1-diphosphate. Orotate is bound at residue F34–F35. 5-phospho-alpha-D-ribose 1-diphosphate is bound by residues Y72–K73, R99, K100, K103, H105, and D124–A132. Orotate-binding residues include T128 and R156.

This sequence belongs to the purine/pyrimidine phosphoribosyltransferase family. PyrE subfamily. In terms of assembly, homodimer. Mg(2+) is required as a cofactor.

The catalysed reaction is orotidine 5'-phosphate + diphosphate = orotate + 5-phospho-alpha-D-ribose 1-diphosphate. It participates in pyrimidine metabolism; UMP biosynthesis via de novo pathway; UMP from orotate: step 1/2. In terms of biological role, catalyzes the transfer of a ribosyl phosphate group from 5-phosphoribose 1-diphosphate to orotate, leading to the formation of orotidine monophosphate (OMP). This chain is Orotate phosphoribosyltransferase, found in Salmonella arizonae (strain ATCC BAA-731 / CDC346-86 / RSK2980).